The primary structure comprises 236 residues: Large ribosomal subunit protein uL1 (236 aa).

The protein belongs to the universal ribosomal protein uL1 family. As to quaternary structure, part of the 50S ribosomal subunit.

In terms of biological role, binds directly to 23S rRNA. The L1 stalk is quite mobile in the ribosome, and is involved in E site tRNA release. Its function is as follows. Protein L1 is also a translational repressor protein, it controls the translation of the L11 operon by binding to its mRNA. In Corynebacterium efficiens (strain DSM 44549 / YS-314 / AJ 12310 / JCM 11189 / NBRC 100395), this protein is Large ribosomal subunit protein uL1.